The following is a 202-amino-acid chain: Type II restriction enzyme MthZI (202 aa).

It catalyses the reaction Endonucleolytic cleavage of DNA to give specific double-stranded fragments with terminal 5'-phosphates.. In terms of biological role, a P subtype restriction enzyme that recognizes the double-stranded sequence 5'-CTAG-3' and cleaves after C-1. This is Type II restriction enzyme MthZI from Methanothermobacter thermautotrophicus (Methanobacterium thermoformicicum).